The following is a 327-amino-acid chain: 1-aminocyclopropane-1-carboxylate oxidase 1 (327 aa).

The region spanning Pro157–Pro257 is the Fe2OG dioxygenase domain. Positions 181, 183, and 238 each coordinate Fe cation.

It belongs to the iron/ascorbate-dependent oxidoreductase family. Fe cation serves as cofactor.

It carries out the reaction 1-aminocyclopropane-1-carboxylate + L-ascorbate + O2 = ethene + L-dehydroascorbate + hydrogen cyanide + CO2 + 2 H2O. It participates in alkene biosynthesis; ethylene biosynthesis via S-adenosyl-L-methionine; ethylene from S-adenosyl-L-methionine: step 2/2. This chain is 1-aminocyclopropane-1-carboxylate oxidase 1 (ACO1), found in Doritaenopsis sp. (Moth orchid).